Consider the following 415-residue polypeptide: Lipoyl synthase, apicoplast (415 aa).

The signal sequence occupies residues 1–23 (MHFGIPSLFYLYILFSIIMRIKC). The [4Fe-4S] cluster site is built by Cys-153, Cys-158, Cys-164, Cys-179, Cys-183, Cys-186, and Ser-394. One can recognise a Radical SAM core domain in the interval 165–383 (WNIGTATIML…KEEGLKMGFK (219 aa)).

It belongs to the radical SAM superfamily. Lipoyl synthase family. It depends on [4Fe-4S] cluster as a cofactor.

It is found in the plastid. The protein localises to the apicoplast. The enzyme catalyses [[Fe-S] cluster scaffold protein carrying a second [4Fe-4S](2+) cluster] + N(6)-octanoyl-L-lysyl-[protein] + 2 oxidized [2Fe-2S]-[ferredoxin] + 2 S-adenosyl-L-methionine + 4 H(+) = [[Fe-S] cluster scaffold protein] + N(6)-[(R)-dihydrolipoyl]-L-lysyl-[protein] + 4 Fe(3+) + 2 hydrogen sulfide + 2 5'-deoxyadenosine + 2 L-methionine + 2 reduced [2Fe-2S]-[ferredoxin]. Its pathway is protein modification; protein lipoylation via endogenous pathway; protein N(6)-(lipoyl)lysine from octanoyl-[acyl-carrier-protein]: step 2/2. Its function is as follows. Catalyzes the radical-mediated insertion of two sulfur atoms into the C-6 and C-8 positions of the octanoyl moiety bound to the lipoyl domains of lipoate-dependent enzymes, thereby converting the octanoylated domains into lipoylated derivatives. The chain is Lipoyl synthase, apicoplast from Plasmodium falciparum (isolate 3D7).